A 296-amino-acid polypeptide reads, in one-letter code: Guided entry of tail-anchored proteins factor CAMLG (296 aa).

The disordered stretch occupies residues 1 to 79 (MESMAVATDG…SDKLNSLSVP (79 aa)). Over 1–189 (MESMAVATDG…NTTEEFDSFR (189 aa)) the chain is Cytoplasmic. Residue Ser55 is modified to Phosphoserine. Residues 61–72 (SQTKSKQQDSDK) are compositionally biased toward basic and acidic residues. Residues 190 to 207 (IFRLVGCALLALGVRAFV) traverse the membrane as a helical segment. Residues 208 to 212 (CKYLS) lie on the Lumenal side of the membrane. A disulfide bridge connects residues Cys208 and Cys284. The helical transmembrane segment at 213-231 (IFAPFLTLQLAYMGLYKYF) threads the bilayer. The Cytoplasmic portion of the chain corresponds to 232-269 (PKSEKKIKTTVLTAALLLSGIPAEVINRSMDTYSKMGE). A helical transmembrane segment spans residues 270-288 (VFTDLCVYFFTFIFCHELL). Over 289-296 (DYWGSEVP) the chain is Lumenal.

As to quaternary structure, component of the Golgi to ER traffic (GET) complex, which is composed of GET1/WRB, CAMLG/GET2 and GET3/TRC40. Within the complex, GET1 and CAMLG form a heterotetramer which is stabilized by phosphatidylinositol binding and which binds to the GET3 homodimer. Interacts (via C-terminus) with GET1. Interacts (via N-terminus) with GET3. GET3 shows a higher affinity for CAMLG than for GET1. Interacts (via N-terminus) with TNFRSF13B/TACI (via C-terminus). (Microbial infection) Interacts with human herpes virus 8/HHV-8 protein K7; this interaction modulates intracellular calcium concentration. In terms of tissue distribution, ubiquitous. Highest levels in brain, testis and ovary.

Its subcellular location is the endoplasmic reticulum membrane. In terms of biological role, required for the post-translational delivery of tail-anchored (TA) proteins to the endoplasmic reticulum. Together with GET1/WRB, acts as a membrane receptor for soluble GET3/TRC40, which recognizes and selectively binds the transmembrane domain of TA proteins in the cytosol. Required for the stability of GET1. Stimulates calcium signaling in T cells through its involvement in elevation of intracellular calcium. Essential for the survival of peripheral follicular B cells. The sequence is that of Guided entry of tail-anchored proteins factor CAMLG from Homo sapiens (Human).